The sequence spans 700 residues: Elongation factor G 1 (700 aa).

Residues 8–290 (ERYRNIGISA…AVIDYLPSPA (283 aa)) enclose the tr-type G domain. GTP-binding positions include 17–24 (AHIDAGKT), 88–92 (DTPGH), and 142–145 (NKMD).

This sequence belongs to the TRAFAC class translation factor GTPase superfamily. Classic translation factor GTPase family. EF-G/EF-2 subfamily.

It is found in the cytoplasm. Its function is as follows. Catalyzes the GTP-dependent ribosomal translocation step during translation elongation. During this step, the ribosome changes from the pre-translocational (PRE) to the post-translocational (POST) state as the newly formed A-site-bound peptidyl-tRNA and P-site-bound deacylated tRNA move to the P and E sites, respectively. Catalyzes the coordinated movement of the two tRNA molecules, the mRNA and conformational changes in the ribosome. The protein is Elongation factor G 1 of Bordetella parapertussis (strain 12822 / ATCC BAA-587 / NCTC 13253).